Here is a 187-residue protein sequence, read N- to C-terminus: Protein GrpE (187 aa).

Residues 1-23 (MNNEKELKKEETSVENKEKKVAT) are disordered.

The protein belongs to the GrpE family. In terms of assembly, homodimer.

The protein resides in the cytoplasm. In terms of biological role, participates actively in the response to hyperosmotic and heat shock by preventing the aggregation of stress-denatured proteins, in association with DnaK and GrpE. It is the nucleotide exchange factor for DnaK and may function as a thermosensor. Unfolded proteins bind initially to DnaJ; upon interaction with the DnaJ-bound protein, DnaK hydrolyzes its bound ATP, resulting in the formation of a stable complex. GrpE releases ADP from DnaK; ATP binding to DnaK triggers the release of the substrate protein, thus completing the reaction cycle. Several rounds of ATP-dependent interactions between DnaJ, DnaK and GrpE are required for fully efficient folding. The polypeptide is Protein GrpE (Mesoplasma florum (strain ATCC 33453 / NBRC 100688 / NCTC 11704 / L1) (Acholeplasma florum)).